The primary structure comprises 492 residues: Phenylalanine--tRNA ligase alpha subunit (492 aa).

Residues Thr-335, 374–376 (QLE), and Tyr-414 contribute to the L-phenylalanine site. Glu-416 serves as a coordination point for Mg(2+). Phe-439 is an L-phenylalanine binding site.

This sequence belongs to the class-II aminoacyl-tRNA synthetase family. Phe-tRNA synthetase alpha subunit type 2 subfamily. In terms of assembly, tetramer of two alpha and two beta subunits. It depends on Mg(2+) as a cofactor.

The protein resides in the cytoplasm. The enzyme catalyses tRNA(Phe) + L-phenylalanine + ATP = L-phenylalanyl-tRNA(Phe) + AMP + diphosphate + H(+). In Methanosarcina acetivorans (strain ATCC 35395 / DSM 2834 / JCM 12185 / C2A), this protein is Phenylalanine--tRNA ligase alpha subunit.